A 748-amino-acid chain; its full sequence is MNFQTTVVGYPRVGVGRPYKQALERFWSGKLDETGFRAAINELCHDRLATQAQRLDLVPVGDFSLYDHVLDTALMLGAVPARFGKVDAHNLQGYFALARGRDGLPALEMTKWFDTNYHYLVPEIPERWELQANLVLEQVRFAQNVVGAKARPVLLGPWTFLRLARLAGAELAQHLQQLTAMYAQIVRELNDCNVAFIQCDEPALVGDVTEEEWQAFAACYRELSKHGKIVVQTYYGDVTPWYRELCRLPIHGLGLDLVQGHANWAAIQYHGFPQDKILVAGVVNGRNVWRSDLADLYTKITGLSEFVAPERLILSSSCSLLHLPETVTAERNLPVAVSSGLAFAQERLAELELLANALRDGIASVQPTWDAALASRQQWLDGVGRIVPAVRERTAALGTETPARLAYAERVPLQQAKLNLPLLPTTTIGSFPQTAALRKARAEAKRNPTGYAETINAEIAHVIALQEQWGIDVLVHGEPERNDMVQFFAEHLAGYVATQEGWVQSYGSRCVRPPVIAGDVYRTAALSVAETAYAQSLTKRPVKGMLTGPVTMLQWSFVRDDLPRSAVAAQIGLALRDEVTDLEAAGINIIQIDEPAFREGLPLRRNDWQNYLDWAVRAFRIATSDAKPSTQIHTHMCYSDFNDIIAAIAALDADVISIEDARSAGSLLAGLEGRYTQQIGPGVYDIHSPNIPTVEQLVARMRQLLNYLPAEQLWINPDCGLKTRTYAEVAAALQAMVTATKQVRNQIS.

Lys111 lines the 5-methyltetrahydropteroyltri-L-glutamate pocket. Residues 428-430 (IGS) and Glu478 each bind L-homocysteine. Residues 428–430 (IGS) and Glu478 each bind L-methionine. 5-methyltetrahydropteroyltri-L-glutamate is bound by residues 509–510 (RC) and Trp555. Asp593 provides a ligand contact to L-homocysteine. Asp593 is a binding site for L-methionine. Glu599 is a 5-methyltetrahydropteroyltri-L-glutamate binding site. Residues His635, Cys637, and Glu659 each contribute to the Zn(2+) site. His687 (proton donor) is an active-site residue. Cys719 is a Zn(2+) binding site.

Belongs to the vitamin-B12 independent methionine synthase family. The cofactor is Zn(2+).

The enzyme catalyses 5-methyltetrahydropteroyltri-L-glutamate + L-homocysteine = tetrahydropteroyltri-L-glutamate + L-methionine. It participates in amino-acid biosynthesis; L-methionine biosynthesis via de novo pathway; L-methionine from L-homocysteine (MetE route): step 1/1. Functionally, catalyzes the transfer of a methyl group from 5-methyltetrahydrofolate to homocysteine resulting in methionine formation. The chain is 5-methyltetrahydropteroyltriglutamate--homocysteine methyltransferase from Herpetosiphon aurantiacus (strain ATCC 23779 / DSM 785 / 114-95).